The following is a 72-amino-acid chain: Translation initiation factor IF-1 (72 aa).

The 72-residue stretch at 1 to 72 (MTKEDNIEMQ…TKGRIIFRSR (72 aa)) folds into the S1-like domain.

Belongs to the IF-1 family. Component of the 30S ribosomal translation pre-initiation complex which assembles on the 30S ribosome in the order IF-2 and IF-3, IF-1 and N-formylmethionyl-tRNA(fMet); mRNA recruitment can occur at any time during PIC assembly.

It localises to the cytoplasm. One of the essential components for the initiation of protein synthesis. Stabilizes the binding of IF-2 and IF-3 on the 30S subunit to which N-formylmethionyl-tRNA(fMet) subsequently binds. Helps modulate mRNA selection, yielding the 30S pre-initiation complex (PIC). Upon addition of the 50S ribosomal subunit IF-1, IF-2 and IF-3 are released leaving the mature 70S translation initiation complex. The chain is Translation initiation factor IF-1 from Buchnera aphidicola subsp. Schizaphis graminum (strain Sg).